Consider the following 328-residue polypeptide: Bidirectional sugar transporter SWEET16 (328 aa).

The Extracellular segment spans residues 1–5; the sequence is MADPS. Residues 6-26 traverse the membrane as a helical segment; sequence FFVGIVGNVISILVFASPIAT. The 87-residue stretch at 6-92 folds into the MtN3/slv 1 domain; the sequence is FFVGIVGNVI…TLYLAYAPRE (87 aa). The Cytoplasmic segment spans residues 27–38; the sequence is FRRIVRSKSTEE. Residues 39-56 traverse the membrane as a helical segment; sequence FRWLPYVTTLLSTSLWTF. Residues 57–63 lie on the Extracellular side of the membrane; it reads YGLHKPG. Residues 64-84 form a helical membrane-spanning segment; it reads GLLIVTVNGSGAALEAIYVTL. Over 85–99 the chain is Cytoplasmic; it reads YLAYAPRETKAKMVK. The helical transmembrane segment at 100–120 threads the bilayer; sequence VVLAVNVGALAAVVAVALVAL. Residues 121 to 125 lie on the Extracellular side of the membrane; sequence HGGVR. Residues 126 to 146 form a helical membrane-spanning segment; that stretch reads LFVVGVLCAALTIGMYAAPMA. In terms of domain architecture, MtN3/slv 2 spans 127 to 213; the sequence is FVVGVLCAAL…LYMAYRRTKK (87 aa). At 147 to 161 the chain is on the cytoplasmic side; that stretch reads AMRTVVKTRSVEYMP. A helical membrane pass occupies residues 162–182; that stretch reads FSLSFFLFLNGGVWSVYSLLV. The Extracellular portion of the chain corresponds to 183–185; that stretch reads KDY. A helical transmembrane segment spans residues 186–206; sequence FIGIPNAIGFALGTAQLALYM. At 207–328 the chain is on the cytoplasmic side; sequence AYRRTKKPAG…ATTAGPGDRH (122 aa). Residues 288 to 299 are compositionally biased toward basic residues; that stretch reads HQHHGGHHHHHR. The tract at residues 288 to 328 is disordered; that stretch reads HQHHGGHHHHHRFDTVPDDDDEAVAAGGTTPATTAGPGDRH. A compositionally biased stretch (low complexity) spans 312–328; the sequence is AAGGTTPATTAGPGDRH.

This sequence belongs to the SWEET sugar transporter family. In terms of assembly, forms homooligomers and/or heterooligomers.

Its subcellular location is the cell membrane. Its function is as follows. Mediates both low-affinity uptake and efflux of sugar across the plasma membrane. This is Bidirectional sugar transporter SWEET16 (SWEET16) from Oryza sativa subsp. japonica (Rice).